Reading from the N-terminus, the 227-residue chain is Testis-expressed protein 30 (227 aa).

This Homo sapiens (Human) protein is Testis-expressed protein 30 (TEX30).